The sequence spans 1370 residues: DNA-directed RNA polymerase subunit beta (1370 aa).

The protein belongs to the RNA polymerase beta chain family. In terms of assembly, the RNAP catalytic core consists of 2 alpha, 1 beta, 1 beta' and 1 omega subunit. When a sigma factor is associated with the core the holoenzyme is formed, which can initiate transcription.

The enzyme catalyses RNA(n) + a ribonucleoside 5'-triphosphate = RNA(n+1) + diphosphate. Functionally, DNA-dependent RNA polymerase catalyzes the transcription of DNA into RNA using the four ribonucleoside triphosphates as substrates. In Albidiferax ferrireducens (strain ATCC BAA-621 / DSM 15236 / T118) (Rhodoferax ferrireducens), this protein is DNA-directed RNA polymerase subunit beta.